The following is a 240-amino-acid chain: Adenylate dimethylallyltransferase (240 aa).

This sequence belongs to the isopentenyl transferase family.

It catalyses the reaction dimethylallyl diphosphate + AMP = N(6)-(dimethylallyl)adenosine 5'-phosphate + diphosphate. In terms of biological role, transfers dimethylallyl groups to AMP as part of the biosynthesis of cytokinin phytohormones. In Agrobacterium tumefaciens (strain Ach5), this protein is Adenylate dimethylallyltransferase (izt).